The sequence spans 707 residues: Polyribonucleotide nucleotidyltransferase (707 aa).

The Mg(2+) site is built by aspartate 485 and aspartate 491. The region spanning 552-611 (PRIYTMKIDPKKIKDVIGKGGATIRTLTEETGTSIDIDDDGTVKIAAIDGNAVKEVMARI) is the KH domain. One can recognise an S1 motif domain in the interval 621 to 689 (GAVYTGKVTR…RQGRIRLTMK (69 aa)).

Belongs to the polyribonucleotide nucleotidyltransferase family. Component of the RNA degradosome, which is a multiprotein complex involved in RNA processing and mRNA degradation. Mg(2+) is required as a cofactor.

It localises to the cytoplasm. It catalyses the reaction RNA(n+1) + phosphate = RNA(n) + a ribonucleoside 5'-diphosphate. In terms of biological role, involved in mRNA degradation. Catalyzes the phosphorolysis of single-stranded polyribonucleotides processively in the 3'- to 5'-direction. This Actinobacillus succinogenes (strain ATCC 55618 / DSM 22257 / CCUG 43843 / 130Z) protein is Polyribonucleotide nucleotidyltransferase.